The primary structure comprises 486 residues: Cardiolipin synthase A (486 aa).

Transmembrane regions (helical) follow at residues 3–23 (TFYT…IAGV) and 38–58 (MAWL…YLSF). PLD phosphodiesterase domains follow at residues 219–246 (MDLR…VDPR) and 399–426 (EGGL…DMRS). Active-site residues include His-224, Lys-226, Asp-231, His-404, Lys-406, and Asp-411.

Belongs to the phospholipase D family. Cardiolipin synthase subfamily. ClsA sub-subfamily.

The protein localises to the cell inner membrane. It catalyses the reaction 2 a 1,2-diacyl-sn-glycero-3-phospho-(1'-sn-glycerol) = a cardiolipin + glycerol. In terms of biological role, catalyzes the reversible phosphatidyl group transfer from one phosphatidylglycerol molecule to another to form cardiolipin (CL) (diphosphatidylglycerol) and glycerol. The sequence is that of Cardiolipin synthase A from Klebsiella pneumoniae (strain 342).